A 502-amino-acid chain; its full sequence is Glutamate--tRNA ligase (502 aa).

The 'HIGH' region motif lies at Pro9–Thr19. Residues Cys106, Cys108, Cys133, and His135 each contribute to the Zn(2+) site. A 'KMSKS' region motif is present at residues Lys250 to Arg254. Residue Lys253 participates in ATP binding.

It belongs to the class-I aminoacyl-tRNA synthetase family. Glutamate--tRNA ligase type 1 subfamily. As to quaternary structure, monomer. Zn(2+) is required as a cofactor.

The protein localises to the cytoplasm. It carries out the reaction tRNA(Glu) + L-glutamate + ATP = L-glutamyl-tRNA(Glu) + AMP + diphosphate. In terms of biological role, catalyzes the attachment of glutamate to tRNA(Glu) in a two-step reaction: glutamate is first activated by ATP to form Glu-AMP and then transferred to the acceptor end of tRNA(Glu). The sequence is that of Glutamate--tRNA ligase from Protochlamydia amoebophila (strain UWE25).